A 153-amino-acid chain; its full sequence is Large ribosomal subunit protein uL15 (153 aa).

The tract at residues 1-47 (MRLHELSPAPGSRKDRKRVGRGDAGRGNYSGRGMKGQKARSGGATRP) is disordered.

The protein belongs to the universal ribosomal protein uL15 family. Part of the 50S ribosomal subunit.

Functionally, binds to the 23S rRNA. The polypeptide is Large ribosomal subunit protein uL15 (Dehalococcoides mccartyi (strain ATCC BAA-2100 / JCM 16839 / KCTC 5957 / BAV1)).